Consider the following 416-residue polypeptide: MAIVDVKVPQLSESVAEATMLNWKKKPGEAVAQDEILIEIETDKVVLEVPAPSAGVLSIIVKNDGDTVVADEIIAKIDTEATAGAAAPAAAAPAPAAAAPAPAAAVAAPAAAGGVAMPSAAKLMAEAGLSAGQVAGTGKDGRITKGDALAAAAAPAAKAAPAPAAAKPALQQVSAPVDFAALGDRPEERVPMSRLRARIAERLLQSQSTNAILTTFNEVNMKPVMDLRNKYKDRFEKEHGVKLGFMSFFVKAAVHALKKFPLINASIDGNDIVYHGYFDIGIAVGSPRGLVVPILRNADQMSLADIEKKIAEFGVKARDGKLSLEELTGGTFSISNGGVFGSMLSTPIINPPQSAILGVHATKDRPVVEDGQIVIRPMNYLAMSYDHRIIDGREAVLGLVAMKDALEDPARLLLDL.

Residues 3–78 (IVDVKVPQLS…VADEIIAKID (76 aa)) form the Lipoyl-binding domain. Residue K44 is modified to N6-lipoyllysine. In terms of domain architecture, Peripheral subunit-binding (PSBD) spans 115-152 (VAMPSAAKLMAEAGLSAGQVAGTGKDGRITKGDALAAA). Catalysis depends on residues H387 and D391.

It belongs to the 2-oxoacid dehydrogenase family. As to quaternary structure, forms a 24-polypeptide structural core with octahedral symmetry. Part of the 2-oxoglutarate dehydrogenase (OGDH) complex composed of E1 (2-oxoglutarate dehydrogenase), E2 (dihydrolipoamide succinyltransferase) and E3 (dihydrolipoamide dehydrogenase); the complex contains multiple copies of the three enzymatic components (E1, E2 and E3). Requires (R)-lipoate as cofactor.

It carries out the reaction N(6)-[(R)-dihydrolipoyl]-L-lysyl-[protein] + succinyl-CoA = N(6)-[(R)-S(8)-succinyldihydrolipoyl]-L-lysyl-[protein] + CoA. It functions in the pathway amino-acid degradation; L-lysine degradation via saccharopine pathway; glutaryl-CoA from L-lysine: step 6/6. Its function is as follows. E2 component of the 2-oxoglutarate dehydrogenase (OGDH) complex which catalyzes the second step in the conversion of 2-oxoglutarate to succinyl-CoA and CO(2). The protein is Dihydrolipoyllysine-residue succinyltransferase component of 2-oxoglutarate dehydrogenase complex (sucB) of Cupriavidus necator (strain ATCC 17699 / DSM 428 / KCTC 22496 / NCIMB 10442 / H16 / Stanier 337) (Ralstonia eutropha).